A 230-amino-acid polypeptide reads, in one-letter code: Small ribosomal subunit protein uS3 (230 aa).

A KH type-2 domain is found at 43–95; sequence VNRVIIYSARPKMISEERKAHLAKLLELKFGLEKPVIEVLPIENPNLDAHVIA.

This sequence belongs to the universal ribosomal protein uS3 family. In terms of assembly, part of the 30S ribosomal subunit.

In terms of biological role, binds the lower part of the 30S subunit head. In Nanoarchaeum equitans (strain Kin4-M), this protein is Small ribosomal subunit protein uS3.